The following is a 249-amino-acid chain: NAD kinase (249 aa).

The Proton acceptor role is filled by Asp45. NAD(+) is bound by residues 45 to 46 (DG), Arg50, 110 to 111 (NE), Asp138, and 149 to 154 (SGWGMS).

Belongs to the NAD kinase family. A divalent metal cation is required as a cofactor.

It is found in the cytoplasm. The catalysed reaction is NAD(+) + ATP = ADP + NADP(+) + H(+). In terms of biological role, involved in the regulation of the intracellular balance of NAD and NADP, and is a key enzyme in the biosynthesis of NADP. Catalyzes specifically the phosphorylation on 2'-hydroxyl of the adenosine moiety of NAD to yield NADP. The sequence is that of NAD kinase from Saccharolobus islandicus (strain Y.N.15.51 / Yellowstone #2) (Sulfolobus islandicus).